Consider the following 309-residue polypeptide: Porphobilinogen deaminase (309 aa).

An S-(dipyrrolylmethanemethyl)cysteine modification is found at Cys244.

Belongs to the HMBS family. As to quaternary structure, monomer. Dipyrromethane serves as cofactor.

The catalysed reaction is 4 porphobilinogen + H2O = hydroxymethylbilane + 4 NH4(+). Its pathway is porphyrin-containing compound metabolism; protoporphyrin-IX biosynthesis; coproporphyrinogen-III from 5-aminolevulinate: step 2/4. Functionally, tetrapolymerization of the monopyrrole PBG into the hydroxymethylbilane pre-uroporphyrinogen in several discrete steps. The sequence is that of Porphobilinogen deaminase from Listeria monocytogenes serotype 4a (strain HCC23).